The primary structure comprises 294 residues: Potassium-transporting ATPase subunit beta (294 aa).

Over 1–36 the chain is Cytoplasmic; the sequence is MAALQEKKSCSQRMAEFRQYCWNPDTGQMLGRTPAR. Residues 37 to 57 form a helical; Signal-anchor for type II membrane protein membrane-spanning segment; sequence WVWISLYYAAFYVVMTGLFAL. At 58–294 the chain is on the extracellular side; sequence CIYVLMQTID…KVEFKLTIQK (237 aa). N-linked (GlcNAc...) asparagine glycosylation is found at asparagine 99, asparagine 103, asparagine 130, asparagine 146, and asparagine 161. Cysteine 131 and cysteine 152 form a disulfide bridge. An intrachain disulfide couples cysteine 162 to cysteine 178. N-linked (GlcNAc...) asparagine glycans are attached at residues asparagine 193 and asparagine 225. The immunoglobulin-like stretch occupies residues 194–294; sequence NTAPRVDCTF…KVEFKLTIQK (101 aa). Cysteine 201 and cysteine 266 are joined by a disulfide.

This sequence belongs to the X(+)/potassium ATPases subunit beta family. The ATPase pump is composed of two subunits: alpha (catalytic) and beta (regulatory). Interacts with alpha subunit ATP12A; this interaction is required for the formation of a functionally active pump and targeting at the plasma membrane. Interacts (via N-terminus) with alpha subunit ATP4A (via the P-domain). N-glycosylation is necessary for assembly and functional expression of the pump at the plasma membrane. As to expression, stomach.

Its subcellular location is the apical cell membrane. The protein resides in the cell membrane. Functionally, the beta subunit of the gastric H(+)/K(+) ATPase pump which transports H(+) ions in exchange for K(+) ions across the apical membrane of parietal cells. Plays a structural and regulatory role in the assembly and membrane targeting of a functionally active pump. Within a transport cycle, the transfer of a H(+) ion across the membrane is coupled to ATP hydrolysis and is associated with a transient phosphorylation of the alpha subunit that shifts the pump conformation from inward-facing (E1) to outward-facing state (E2). Interacts with the phosphorylation domain of the alpha subunit and functions as a ratchet, stabilizing the lumenal-open E2 conformation and preventing the reverse reaction of the transport cycle. This chain is Potassium-transporting ATPase subunit beta (Atp4b), found in Rattus norvegicus (Rat).